The following is a 90-amino-acid chain: PIK3R3 upstream open reading frame protein (90 aa).

The segment at 1–63 is disordered; it reads MGPSQLVRAP…PASEATNISD (63 aa). The span at 27 to 46 shows a compositional bias: basic residues; it reads PRRRCPSMFKCSRRTYRQKP. Positions 50–63 are enriched in polar residues; sequence TATNPASEATNISD.

The sequence is that of PIK3R3 upstream open reading frame protein from Mus musculus (Mouse).